The following is a 316-amino-acid chain: Homoserine kinase (316 aa).

Position 97–107 (97–107 (PPARGLGSSAS)) interacts with ATP.

It belongs to the GHMP kinase family. Homoserine kinase subfamily.

It is found in the cytoplasm. It carries out the reaction L-homoserine + ATP = O-phospho-L-homoserine + ADP + H(+). It functions in the pathway amino-acid biosynthesis; L-threonine biosynthesis; L-threonine from L-aspartate: step 4/5. In terms of biological role, catalyzes the ATP-dependent phosphorylation of L-homoserine to L-homoserine phosphate. This Prochlorococcus marinus (strain MIT 9313) protein is Homoserine kinase.